A 515-amino-acid chain; its full sequence is Pre-glycoprotein polyprotein GP complex (515 aa).

Residue Gly-2 is the site of N-myristoyl glycine; by host attachment. Topologically, residues 2 to 17 (GQVIGFFQSLPEIINE) are extracellular. A helical membrane pass occupies residues 18–33 (ALNIALICVALLATIK). The Cytoplasmic portion of the chain corresponds to 34 to 58 (GMVNIWKSGLIQLLFFLTLAGRSCS). Cys-57 serves as a coordination point for Zn(2+). Over 59–453 (HSFTIGRFHE…QGRTPLSLVD (395 aa)) the chain is Extracellular. 4 cysteine pairs are disulfide-bonded: Cys-87-Cys-255, Cys-300-Cys-313, Cys-322-Cys-331, and Cys-385-Cys-406. Asn-90, Asn-112, Asn-127, Asn-180, and Asn-248 each carry an N-linked (GlcNAc...) asparagine; by host glycan. 3 N-linked (GlcNAc...) asparagine; by host glycosylation sites follow: Asn-386, Asn-394, and Asn-416. A helical transmembrane segment spans residues 454-474 (LCFWSTLFYISTLFAHLVGFP). Topologically, residues 475–515 (THRHLIGEGCPKPHRLTGSGICSCGHYGIPGKPVRWTKMSR) are cytoplasmic. Residues His-476, His-478, Cys-484, His-488, Cys-496, and Cys-498 each contribute to the Zn(2+) site.

It belongs to the arenaviridae GPC protein family. Interacts with glycoprotein G2. Part of the GP complex (GP-C) together with glycoprotein G1 and glycoprotein G2. The GP-complex interacts with protein Z, which interacts with ribonucleocapsid; these interactions may induce virion budding. As to quaternary structure, homotrimer; disulfide-linked. In pre-fusion state, G1 homotrimers bind G2 homotrimers via ionic interactions. Part of the GP complex (GP-C) together with glycoprotein G2 and the stable signal peptide. The GP-complex interacts with protein Z, which interacts with ribonucleocapsid; these interactions may induce virion budding. In terms of assembly, homotrimer. Interacts with the stable signal peptide. In pre-fusion state, G2 homotrimers bind G1 homotrimers via ionic interactions. Part of the GP complex (GP-C) together with glycoprotein G1 and the stable signal peptide. Acidification in the endosome triggers rearrangements, which ultimately leads to a 6 helix bundle formed by the two heptad repeat domains (HR1 and HR2) in post-fusion state. The GP-complex interacts with protein Z, which interacts with ribonucleocapsid; these interactions may induce virion budding. Specific enzymatic cleavages in vivo yield mature proteins. GP-C polyprotein is cleaved in the endoplasmic reticulum by the host protease MBTPS1. Only cleaved glycoprotein is incorporated into virions. In terms of processing, the SSP remains stably associated with the GP complex following cleavage by signal peptidase and plays crucial roles in the trafficking of GP through the secretory pathway. Post-translationally, myristoylation is necessary for GP2-mediated fusion activity.

It localises to the virion membrane. Its subcellular location is the host endoplasmic reticulum membrane. The protein localises to the host Golgi apparatus membrane. The protein resides in the host cell membrane. Its function is as follows. Functions as a cleaved signal peptide that is retained as the third component of the GP complex (GP-C). Helps to stabilize the spike complex in its native conformation. The SSP is required for efficient glycoprotein expression, post-translational maturation cleavage of G1 and G2, glycoprotein transport to the cell surface plasma membrane, formation of infectious virus particles, and acid pH-dependent glycoprotein-mediated cell fusion. In terms of biological role, forms the virion spikes together with glycoprotein G2. The glycoprotein spike trimers are connected to the underlying matrix. Mediates virus attachment to host receptor alpha-dystroglycan DAG1. This attachment induces virion internalization predominantly through clathrin- and caveolin-independent endocytosis. Forms the virion spikes together with glycoprotein G1. The glycoprotein spike trimers are connected to the underlying matrix. Class I viral fusion protein that directs fusion of viral and host endosomal membranes, leading to delivery of the nucleocapsid into the cytoplasm. Membrane fusion is mediated by irreversible conformational changes induced by acidification. This Latino mammarenavirus (isolate Rat/Bolivia/MARU 1924/1965) (LATV) protein is Pre-glycoprotein polyprotein GP complex.